The sequence spans 383 residues: Putative glutamate--cysteine ligase 2-1 (383 aa).

Belongs to the glutamate--cysteine ligase type 2 family. YbdK subfamily.

It catalyses the reaction L-cysteine + L-glutamate + ATP = gamma-L-glutamyl-L-cysteine + ADP + phosphate + H(+). Its function is as follows. ATP-dependent carboxylate-amine ligase which exhibits weak glutamate--cysteine ligase activity. The protein is Putative glutamate--cysteine ligase 2-1 of Arthrobacter sp. (strain FB24).